We begin with the raw amino-acid sequence, 379 residues long: Probable protein phosphatase 2C 46 (379 aa).

The N-terminal stretch at 1–20 is a signal peptide; it reads MLSTLMKLLSACLWPSSSSG. The PPM-type phosphatase domain occupies 42-353; that stretch reads LVGEFSMAVV…DDITVVIIFL (312 aa). Position 73 is a phosphoserine (S73). Mn(2+)-binding residues include D84, G85, D285, and D344.

This sequence belongs to the PP2C family. As to quaternary structure, interacts with SAUR19. Requires Mg(2+) as cofactor. Mn(2+) is required as a cofactor.

It carries out the reaction O-phospho-L-seryl-[protein] + H2O = L-seryl-[protein] + phosphate. The catalysed reaction is O-phospho-L-threonyl-[protein] + H2O = L-threonyl-[protein] + phosphate. May dephosphorylate and repress plasma membrane H(+)-ATPases (PM H(+)-ATPases, e.g. AHA1 and AHA2), thus influencing negatively plant growth and fitness. In Arabidopsis thaliana (Mouse-ear cress), this protein is Probable protein phosphatase 2C 46.